The sequence spans 1020 residues: Sodium/potassium-transporting ATPase subunit alpha-2 (1020 aa).

A propeptide spanning residues 1–5 (MGRGA) is cleaved from the precursor. The segment at 1–31 (MGRGAGREYSPAATTAENGGGKKKQKEKELD) is disordered. The Cytoplasmic portion of the chain corresponds to 6–85 (GREYSPAATT…NALTPPPTTP (80 aa)). Ser10 carries the phosphoserine modification. The segment at 80-82 (PPP) is interaction with phosphoinositide-3 kinase. The chain crosses the membrane as a helical span at residues 86-106 (EWVKFCRQLFGGFSILLWIGA). Residues 107–129 (ILCFLAYGIQAAMEDEPSNDNLY) lie on the Extracellular side of the membrane. The helical transmembrane segment at 130–150 (LGVVLAAVVIVTGCFSYYQEA) threads the bilayer. At 151–286 (KSSKIMDSFK…VGRTPIAMEI (136 aa)) the chain is on the cytoplasmic side. The segment covering 212 to 227 (DNSSLTGESEPQTRSP) has biased composition (polar residues). The tract at residues 212-231 (DNSSLTGESEPQTRSPEFTH) is disordered. Residues 287-306 (EHFIQLITGVAVFPGVSFFV) form a helical membrane-spanning segment. Over 307–318 (LSLILGYSWLEA) the chain is Extracellular. A helical membrane pass occupies residues 319–336 (VIFLIGIIVANVPEGLLA). Topologically, residues 337 to 769 (TVTVCLTLTA…EEGRLVFDNL (433 aa)) are cytoplasmic. The 4-aspartylphosphate intermediate role is filled by Asp374. Residues Ser439, Ser450, Ser496, and Ser559 each carry the phosphoserine modification. Residue Thr570 is modified to Phosphothreonine. A phosphoserine mark is found at Ser587 and Ser672. Residues Asp714 and Asp718 each contribute to the Mg(2+) site. Residues 770–789 (KKSIAYTLTSNIPEITPFLL) traverse the membrane as a helical segment. Residues 790 to 799 (FIIANIPLPL) lie on the Extracellular side of the membrane. The chain crosses the membrane as a helical span at residues 800-820 (GTVTILCIDLGTDMVPAISLA). The Cytoplasmic portion of the chain corresponds to 821 to 840 (YEAAESDIMKRQPRNSQTDK). Ser826 carries the post-translational modification Phosphoserine. Residues 841–863 (LVNERLISMAYGQIGMIQALGGF) traverse the membrane as a helical segment. Residues 864-915 (FTYFVILAENGFLPSRLLGIRLDWDDRTMNDLEDSYGQEWTYEQRKVVEFTC) are Extracellular-facing. The chain crosses the membrane as a helical span at residues 916–935 (HTAFFASIVVVQWADLIICK). Over 936–948 (TRRNSVFQQGMKN) the chain is Cytoplasmic. Ser940 is modified (phosphoserine; by PKA). Residues 949-967 (KILIFGLLEETALAAFLSY) form a helical membrane-spanning segment. Topologically, residues 968–982 (CPGMGVALRMYPLKV) are extracellular. Residues 983-1003 (TWWFCAFPYSLLIFIYDEVRK) form a helical membrane-spanning segment. Residues 1004–1020 (LILRRYPGGWVEKETYY) are Cytoplasmic-facing.

Belongs to the cation transport ATPase (P-type) (TC 3.A.3) family. Type IIC subfamily. The sodium/potassium-transporting ATPase is composed of a catalytic alpha subunit, an auxiliary non-catalytic beta subunit and an additional regulatory subunit. Interacts with regulatory subunit FXYD1.

The protein localises to the membrane. It is found in the cell membrane. The enzyme catalyses K(+)(out) + Na(+)(in) + ATP + H2O = K(+)(in) + Na(+)(out) + ADP + phosphate + H(+). In terms of biological role, this is the catalytic component of the active enzyme, which catalyzes the hydrolysis of ATP coupled with the exchange of sodium and potassium ions across the plasma membrane. This action creates the electrochemical gradient of sodium and potassium, providing the energy for active transport of various nutrients. The sequence is that of Sodium/potassium-transporting ATPase subunit alpha-2 (ATP1A2) from Pongo abelii (Sumatran orangutan).